We begin with the raw amino-acid sequence, 336 residues long: Ketol-acid reductoisomerase (NADP(+)) 1 (336 aa).

A KARI N-terminal Rossmann domain is found at 2–181; that stretch reads AKVYYEKDVT…GATRAGVLET (180 aa). NADP(+) is bound by residues 25-28, arginine 48, serine 52, and 82-85; these read YGSQ and DELQ. Histidine 107 is a catalytic residue. Residue glycine 133 participates in NADP(+) binding. One can recognise a KARI C-terminal knotted domain in the interval 182-327; it reads TFKEETETDL…RKLREMMPFV (146 aa). Mg(2+) contacts are provided by aspartate 190, glutamate 194, glutamate 226, and glutamate 230. Serine 251 contacts substrate.

Belongs to the ketol-acid reductoisomerase family. Requires Mg(2+) as cofactor.

It catalyses the reaction (2R)-2,3-dihydroxy-3-methylbutanoate + NADP(+) = (2S)-2-acetolactate + NADPH + H(+). The catalysed reaction is (2R,3R)-2,3-dihydroxy-3-methylpentanoate + NADP(+) = (S)-2-ethyl-2-hydroxy-3-oxobutanoate + NADPH + H(+). Its pathway is amino-acid biosynthesis; L-isoleucine biosynthesis; L-isoleucine from 2-oxobutanoate: step 2/4. It participates in amino-acid biosynthesis; L-valine biosynthesis; L-valine from pyruvate: step 2/4. In terms of biological role, involved in the biosynthesis of branched-chain amino acids (BCAA). Catalyzes an alkyl-migration followed by a ketol-acid reduction of (S)-2-acetolactate (S2AL) to yield (R)-2,3-dihydroxy-isovalerate. In the isomerase reaction, S2AL is rearranged via a Mg-dependent methyl migration to produce 3-hydroxy-3-methyl-2-ketobutyrate (HMKB). In the reductase reaction, this 2-ketoacid undergoes a metal-dependent reduction by NADPH to yield (R)-2,3-dihydroxy-isovalerate. The protein is Ketol-acid reductoisomerase (NADP(+)) 1 of Bacillus thuringiensis subsp. konkukian (strain 97-27).